The following is a 253-amino-acid chain: tRNA pseudouridine synthase A (253 aa).

Asp-52 functions as the Nucleophile in the catalytic mechanism. Residue Tyr-111 participates in substrate binding.

The protein belongs to the tRNA pseudouridine synthase TruA family. Homodimer.

It carries out the reaction uridine(38/39/40) in tRNA = pseudouridine(38/39/40) in tRNA. Formation of pseudouridine at positions 38, 39 and 40 in the anticodon stem and loop of transfer RNAs. In Methylobacterium radiotolerans (strain ATCC 27329 / DSM 1819 / JCM 2831 / NBRC 15690 / NCIMB 10815 / 0-1), this protein is tRNA pseudouridine synthase A.